The primary structure comprises 204 residues: Large ribosomal subunit protein uL4 (204 aa).

Residues 52–76 are disordered; sequence AEVRGGGKKPWAQKGGGRARAGSRR.

This sequence belongs to the universal ribosomal protein uL4 family. In terms of assembly, part of the 50S ribosomal subunit.

Its function is as follows. One of the primary rRNA binding proteins, this protein initially binds near the 5'-end of the 23S rRNA. It is important during the early stages of 50S assembly. It makes multiple contacts with different domains of the 23S rRNA in the assembled 50S subunit and ribosome. Functionally, forms part of the polypeptide exit tunnel. The chain is Large ribosomal subunit protein uL4 from Sulfurimonas denitrificans (strain ATCC 33889 / DSM 1251) (Thiomicrospira denitrificans (strain ATCC 33889 / DSM 1251)).